The sequence spans 344 residues: N,N-dimethyltransferase OxyT (344 aa).

S-adenosyl-L-methionine-binding positions include D205 and 231–233 (GDF).

The protein belongs to the class I-like SAM-binding methyltransferase superfamily. Cation-independent O-methyltransferase family.

The enzyme catalyses 4-amino-4-dedimethylamino-anhydrotetracycline + S-adenosyl-L-methionine = 4-methylamino-4-dedimethylamino-anhydrotetracycline + S-adenosyl-L-homocysteine + H(+). It carries out the reaction 4-methylamino-4-dedimethylamino-anhydrotetracycline + S-adenosyl-L-methionine = anhydrotetracycline + S-adenosyl-L-homocysteine + H(+). It functions in the pathway antibiotic biosynthesis; oxytetracycline biosynthesis. Functionally, involved in the biosynthesis of the tetracycline antibiotic, oxytetracycline. Catalyzes the dimethylation of 4-amino-4-de(dimethylamino)anhydrotetracycline (4-amino-ATC) to yield anhydrotetracycline (ATC). Also able to catalyze the dimethylation of 7-chloro-, 6-demethyl-, 2-decarboxamido-2-nitrile-, and 4-methylamino-derivatives of 4-amino-4-de(dimethylamino)anhydrotetracycline. This is N,N-dimethyltransferase OxyT from Streptomyces rimosus.